We begin with the raw amino-acid sequence, 635 residues long: DNA mismatch repair protein MutL (635 aa).

The disordered stretch occupies residues 359-399 (GTNKYAQPEAAKSSAAEQAVARERSSARERAAPAYKEDHPY). Residues 364–377 (AQPEAAKSSAAEQA) are compositionally biased toward low complexity. Positions 378–399 (VARERSSARERAAPAYKEDHPY) are enriched in basic and acidic residues.

Belongs to the DNA mismatch repair MutL/HexB family.

This protein is involved in the repair of mismatches in DNA. It is required for dam-dependent methyl-directed DNA mismatch repair. May act as a 'molecular matchmaker', a protein that promotes the formation of a stable complex between two or more DNA-binding proteins in an ATP-dependent manner without itself being part of a final effector complex. The polypeptide is DNA mismatch repair protein MutL (Yersinia pestis bv. Antiqua (strain Antiqua)).